We begin with the raw amino-acid sequence, 37 residues long: Lambda-hexatoxin-Hf1a (37 aa).

4 disulfide bridges follow: cysteine 4–cysteine 18, cysteine 11–cysteine 23, cysteine 14–cysteine 15, and cysteine 17–cysteine 34.

Belongs to the neurotoxin 11 (kappa toxin) family. As to expression, expressed by the venom gland.

Its subcellular location is the secreted. Its function is as follows. This excitatory toxin inhibits insect calcium-activated potassium (KCa) channels (Slo-type). This is Lambda-hexatoxin-Hf1a from Hadronyche formidabilis (Northern tree funnel-web spider).